The chain runs to 163 residues: SsrA-binding protein (163 aa).

The protein belongs to the SmpB family.

It localises to the cytoplasm. Its function is as follows. Required for rescue of stalled ribosomes mediated by trans-translation. Binds to transfer-messenger RNA (tmRNA), required for stable association of tmRNA with ribosomes. tmRNA and SmpB together mimic tRNA shape, replacing the anticodon stem-loop with SmpB. tmRNA is encoded by the ssrA gene; the 2 termini fold to resemble tRNA(Ala) and it encodes a 'tag peptide', a short internal open reading frame. During trans-translation Ala-aminoacylated tmRNA acts like a tRNA, entering the A-site of stalled ribosomes, displacing the stalled mRNA. The ribosome then switches to translate the ORF on the tmRNA; the nascent peptide is terminated with the 'tag peptide' encoded by the tmRNA and targeted for degradation. The ribosome is freed to recommence translation, which seems to be the essential function of trans-translation. The chain is SsrA-binding protein from Shewanella sp. (strain ANA-3).